The chain runs to 187 residues: UPF0301 protein Pcryo_0062 (187 aa).

Belongs to the UPF0301 (AlgH) family.

The polypeptide is UPF0301 protein Pcryo_0062 (Psychrobacter cryohalolentis (strain ATCC BAA-1226 / DSM 17306 / VKM B-2378 / K5)).